Consider the following 339-residue polypeptide: Protein LicA (339 aa).

9 consecutive repeat copies span residues 4-7, 8-11, 12-15, 16-19, 20-23, 24-27, 28-31, 32-35, and 36-39. Residues 4-39 form a 9 X 4 AA tandem repeats of I-N-Q-S region; the sequence is INQSINQSINQSINQSINQSINQSINQSINQSINQS.

This sequence belongs to the peptidase S49 family.

Its function is as follows. Mediates phase variation of the LOS 6A2 and 12D9 epitopes. Phase variation of H.influenza LOS epitopes expressed by LicA is determined by a translational switch. This Haemophilus influenzae protein is Protein LicA (licA).